The chain runs to 124 residues: Large ribosomal subunit protein bL20 (124 aa).

The protein belongs to the bacterial ribosomal protein bL20 family.

Its function is as follows. Binds directly to 23S ribosomal RNA and is necessary for the in vitro assembly process of the 50S ribosomal subunit. It is not involved in the protein synthesizing functions of that subunit. This Gemmatimonas aurantiaca (strain DSM 14586 / JCM 11422 / NBRC 100505 / T-27) protein is Large ribosomal subunit protein bL20.